The following is a 449-amino-acid chain: MFS acetylaranotin efflux transporter ataA (449 aa).

The next 7 membrane-spanning stretches (helical) occupy residues 6–26 (SVYV…TAIP), 45–65 (YLLV…YFPI), 67–87 (WVFL…GAAP), 115–135 (FYIN…FLHV), 155–175 (LGVV…QWGG), 182–202 (NGRI…FLAI), and 227–247 (LFMT…PIWF). An N-linked (GlcNAc...) asparagine glycan is attached at asparagine 252. The next 5 helical transmembrane spans lie at 260-280 (IMCL…GGGV), 287-307 (VPFF…MTTF), 321-341 (VLLG…VQAV), 349-369 (VGTA…VSVA), and 420-440 (ALVS…LGAV).

It belongs to the major facilitator superfamily.

The protein resides in the cell membrane. Its function is as follows. Efflux pump that may provide the dual role of acetylaranotin export and self-protection by allowing the fungus to evade the harmful effect of its own acetylaranotin production. The chain is MFS acetylaranotin efflux transporter ataA from Aspergillus terreus (strain NIH 2624 / FGSC A1156).